Here is a 130-residue protein sequence, read N- to C-terminus: Small ribosomal subunit protein uS17m (130 aa).

A mitochondrion-targeting transit peptide spans 1-20 (MSVVRSSVHARWIVGKVIGT).

Belongs to the universal ribosomal protein uS17 family. In terms of assembly, component of the mitochondrial small ribosomal subunit (mt-SSU). Mature mammalian 55S mitochondrial ribosomes consist of a small (28S) and a large (39S) subunit. The 28S small subunit contains a 12S ribosomal RNA (12S mt-rRNA) and 30 different proteins. The 39S large subunit contains a 16S rRNA (16S mt-rRNA), a copy of mitochondrial valine transfer RNA (mt-tRNA(Val)), which plays an integral structural role, and 52 different proteins.

Its subcellular location is the mitochondrion. This chain is Small ribosomal subunit protein uS17m (MRPS17), found in Homo sapiens (Human).